A 269-amino-acid chain; its full sequence is Cytochrome c oxidase subunit 3 (269 aa).

The next 7 membrane-spanning stretches (helical) occupy residues 21 to 41 (PWPM…GLTM), 45 to 65 (IGNM…SVFW), 90 to 110 (GFLL…WAYF), 138 to 160 (PLLN…HALI), 167 to 187 (ALSG…CQYI), 205 to 225 (FYAG…MLII), and 247 to 267 (ILYC…FYWW).

This sequence belongs to the cytochrome c oxidase subunit 3 family. Component of the cytochrome c oxidase (complex IV, CIV), a multisubunit enzyme composed of a catalytic core of 3 subunits and several supernumerary subunits. The complex exists as a monomer or a dimer and forms supercomplexes (SCs) in the inner mitochondrial membrane with ubiquinol-cytochrome c oxidoreductase (cytochrome b-c1 complex, complex III, CIII).

The protein localises to the mitochondrion inner membrane. It catalyses the reaction 4 Fe(II)-[cytochrome c] + O2 + 8 H(+)(in) = 4 Fe(III)-[cytochrome c] + 2 H2O + 4 H(+)(out). Functionally, component of the cytochrome c oxidase, the last enzyme in the mitochondrial electron transport chain which drives oxidative phosphorylation. The respiratory chain contains 3 multisubunit complexes succinate dehydrogenase (complex II, CII), ubiquinol-cytochrome c oxidoreductase (cytochrome b-c1 complex, complex III, CIII) and cytochrome c oxidase (complex IV, CIV), that cooperate to transfer electrons derived from NADH and succinate to molecular oxygen, creating an electrochemical gradient over the inner membrane that drives transmembrane transport and the ATP synthase. Cytochrome c oxidase is the component of the respiratory chain that catalyzes the reduction of oxygen to water. Electrons originating from reduced cytochrome c in the intermembrane space (IMS) are transferred via the dinuclear copper A center (CU(A)) of subunit 2 and heme A of subunit 1 to the active site in subunit 1, a binuclear center (BNC) formed by heme A3 and copper B (CU(B)). The BNC reduces molecular oxygen to 2 water molecules using 4 electrons from cytochrome c in the IMS and 4 protons from the mitochondrial matrix. The protein is Cytochrome c oxidase subunit 3 (COX3) of Candida glabrata (strain ATCC 2001 / BCRC 20586 / JCM 3761 / NBRC 0622 / NRRL Y-65 / CBS 138) (Yeast).